The sequence spans 103 residues: Large ribosomal subunit protein uL24 (103 aa).

This sequence belongs to the universal ribosomal protein uL24 family. In terms of assembly, part of the 50S ribosomal subunit.

Functionally, one of two assembly initiator proteins, it binds directly to the 5'-end of the 23S rRNA, where it nucleates assembly of the 50S subunit. Its function is as follows. One of the proteins that surrounds the polypeptide exit tunnel on the outside of the subunit. The sequence is that of Large ribosomal subunit protein uL24 from Geobacillus sp. (strain WCH70).